Consider the following 243-residue polypeptide: Terpene cyclase janB (243 aa).

7 helical membrane-spanning segments follow: residues 19–39 (LADL…VGMV), 48–68 (YGMA…YCVF), 77–97 (LGVF…AIIF), 112–132 (LPWI…ALAA), 134–154 (IGPS…LSVG), 172–194 (LWLS…WMYW), and 205–225 (LVLW…VCFW).

This sequence belongs to the paxB family.

The protein localises to the membrane. Its pathway is secondary metabolite biosynthesis. In terms of biological role, terpene cyclase; part of the gene cluster that mediates the biosynthesis of the indole diterpenes janthitremanes such as shearinine K or shearinine A. The geranylgeranyl diphosphate (GGPP) synthase janG catalyzes the first step in janthitremane biosynthesis via conversion of farnesyl pyrophosphate and isopentyl pyrophosphate into geranylgeranyl pyrophosphate (GGPP). Condensation of indole-3-glycerol phosphate with GGPP by the prenyl transferase janC then forms 3-geranylgeranylindole (3-GGI). Epoxidation by the FAD-dependent monooxygenase janM leads to a epoxidized-GGI that is substrate of the terpene cyclase janB for cyclization to yield paspaline. Paspaline is subsequently converted to 13-desoxypaspaline by the cytochrome P450 monooxygenase janP, via beta-PC-M6 in a series of alpha-face oxidations. The cytochrome P450 monooxygenase janQ is proposed to carry out sequential beta-face oxidation steps at C-7 and C-13 of 13-desoxypaspaline to form paspalicine and paspalinine respectively. The indole diterpene prenyltransferase janD may then convert paspalinine into shearinine K which is substrate of janO and/or additional enzymes for oxidation and cyclization to generate shearinine A. This chain is Terpene cyclase janB, found in Penicillium janthinellum (Penicillium vitale).